A 119-amino-acid polypeptide reads, in one-letter code: Large ribosomal subunit protein bL20 (119 aa).

It belongs to the bacterial ribosomal protein bL20 family.

Functionally, binds directly to 23S ribosomal RNA and is necessary for the in vitro assembly process of the 50S ribosomal subunit. It is not involved in the protein synthesizing functions of that subunit. The sequence is that of Large ribosomal subunit protein bL20 from Thermoanaerobacter pseudethanolicus (strain ATCC 33223 / 39E) (Clostridium thermohydrosulfuricum).